The chain runs to 305 residues: Glycine--tRNA ligase alpha subunit (305 aa).

This sequence belongs to the class-II aminoacyl-tRNA synthetase family. In terms of assembly, tetramer of two alpha and two beta subunits.

It is found in the cytoplasm. The enzyme catalyses tRNA(Gly) + glycine + ATP = glycyl-tRNA(Gly) + AMP + diphosphate. This Vibrio vulnificus (strain CMCP6) protein is Glycine--tRNA ligase alpha subunit.